A 413-amino-acid chain; its full sequence is Phosphopentomutase (413 aa).

Mn(2+) is bound by residues D11, D306, H311, D347, H348, and H359.

The protein belongs to the phosphopentomutase family. Mn(2+) is required as a cofactor.

Its subcellular location is the cytoplasm. The catalysed reaction is 2-deoxy-alpha-D-ribose 1-phosphate = 2-deoxy-D-ribose 5-phosphate. It carries out the reaction alpha-D-ribose 1-phosphate = D-ribose 5-phosphate. It functions in the pathway carbohydrate degradation; 2-deoxy-D-ribose 1-phosphate degradation; D-glyceraldehyde 3-phosphate and acetaldehyde from 2-deoxy-alpha-D-ribose 1-phosphate: step 1/2. Functionally, isomerase that catalyzes the conversion of deoxy-ribose 1-phosphate (dRib-1-P) and ribose 1-phosphate (Rib-1-P) to deoxy-ribose 5-phosphate (dRib-5-P) and ribose 5-phosphate (Rib-5-P), respectively. In Helicobacter pylori (strain J99 / ATCC 700824) (Campylobacter pylori J99), this protein is Phosphopentomutase.